Consider the following 186-residue polypeptide: MTAGIDLNDIKRRMDGAINAFKSDLASLRTGRASANILDPVMVEAYGSRVALNTVANITVPEPRMLGVSIWDKSMVGAVDRAIRESNLGLNPIVDGQNLRIPLPELNEERRKSLVKVAHGYAENSKVAIRHVRRDGMDSLKKAEKDGEIGKDDARSLSEKLQKMTDDTISDIDRLLAEKEKEIMQV.

The protein belongs to the RRF family.

The protein resides in the cytoplasm. Functionally, responsible for the release of ribosomes from messenger RNA at the termination of protein biosynthesis. May increase the efficiency of translation by recycling ribosomes from one round of translation to another. The protein is Ribosome-recycling factor of Allorhizobium ampelinum (strain ATCC BAA-846 / DSM 112012 / S4) (Agrobacterium vitis (strain S4)).